The primary structure comprises 102 residues: Large ribosomal subunit protein bL21 (102 aa).

Belongs to the bacterial ribosomal protein bL21 family. As to quaternary structure, part of the 50S ribosomal subunit. Contacts protein L20.

Its function is as follows. This protein binds to 23S rRNA in the presence of protein L20. This Photorhabdus laumondii subsp. laumondii (strain DSM 15139 / CIP 105565 / TT01) (Photorhabdus luminescens subsp. laumondii) protein is Large ribosomal subunit protein bL21.